We begin with the raw amino-acid sequence, 491 residues long: 2,3-bisphosphoglycerate-independent phosphoglycerate mutase (491 aa).

Mn(2+) is bound by residues D11 and S61. S61 serves as the catalytic Phosphoserine intermediate. Residues H118, 147–148 (RD), R177, R183, 248–251 (RSDR), and K320 each bind substrate. Mn(2+) is bound by residues D386, H390, D427, H428, and H445.

This sequence belongs to the BPG-independent phosphoglycerate mutase family. As to quaternary structure, monomer. Mn(2+) serves as cofactor.

The enzyme catalyses (2R)-2-phosphoglycerate = (2R)-3-phosphoglycerate. It functions in the pathway carbohydrate degradation; glycolysis; pyruvate from D-glyceraldehyde 3-phosphate: step 3/5. Catalyzes the interconversion of 2-phosphoglycerate and 3-phosphoglycerate. This chain is 2,3-bisphosphoglycerate-independent phosphoglycerate mutase, found in Aliarcobacter butzleri (strain RM4018) (Arcobacter butzleri).